The sequence spans 125 residues: Large ribosomal subunit protein eL31 (125 aa).

Met-1 bears the N-acetylmethionine mark. At Ser-15 the chain carries Phosphoserine. 2 positions are modified to N6-succinyllysine: Lys-55 and Lys-70. Lys-75 bears the N6-acetyllysine; alternate mark. Position 75 is an N6-succinyllysine; alternate (Lys-75). Ser-98 is subject to Phosphoserine.

This sequence belongs to the eukaryotic ribosomal protein eL31 family. Component of the large ribosomal subunit.

The protein resides in the cytoplasm. In terms of biological role, component of the large ribosomal subunit. The ribosome is a large ribonucleoprotein complex responsible for the synthesis of proteins in the cell. The polypeptide is Large ribosomal subunit protein eL31 (RPL31) (Pongo abelii (Sumatran orangutan)).